A 476-amino-acid chain; its full sequence is Bifunctional protein HldE (476 aa).

A ribokinase region spans residues 1–318; the sequence is MKVTLPDFRR…ENAIRGRAET (318 aa). 195 to 198 contributes to the ATP binding site; sequence NLSE. The active site involves Asp264. A cytidylyltransferase region spans residues 344–476; the sequence is MTNGIFDILH…IIQSIKNGRG (133 aa).

In the N-terminal section; belongs to the carbohydrate kinase PfkB family. This sequence in the C-terminal section; belongs to the cytidylyltransferase family. In terms of assembly, homodimer.

The catalysed reaction is D-glycero-beta-D-manno-heptose 7-phosphate + ATP = D-glycero-beta-D-manno-heptose 1,7-bisphosphate + ADP + H(+). It carries out the reaction D-glycero-beta-D-manno-heptose 1-phosphate + ATP + H(+) = ADP-D-glycero-beta-D-manno-heptose + diphosphate. Its pathway is nucleotide-sugar biosynthesis; ADP-L-glycero-beta-D-manno-heptose biosynthesis; ADP-L-glycero-beta-D-manno-heptose from D-glycero-beta-D-manno-heptose 7-phosphate: step 1/4. It participates in nucleotide-sugar biosynthesis; ADP-L-glycero-beta-D-manno-heptose biosynthesis; ADP-L-glycero-beta-D-manno-heptose from D-glycero-beta-D-manno-heptose 7-phosphate: step 3/4. Catalyzes the phosphorylation of D-glycero-D-manno-heptose 7-phosphate at the C-1 position to selectively form D-glycero-beta-D-manno-heptose-1,7-bisphosphate. Its function is as follows. Catalyzes the ADP transfer from ATP to D-glycero-beta-D-manno-heptose 1-phosphate, yielding ADP-D-glycero-beta-D-manno-heptose. The chain is Bifunctional protein HldE from Yersinia pestis bv. Antiqua (strain Antiqua).